Consider the following 1960-residue polypeptide: Nuclear pore complex protein Nup98-Nup96 (1960 aa).

Tandem repeats lie at residues 2 to 3 (FG), 9 to 10 (FG), 18 to 19 (FG), 30 to 31 (FG), 35 to 36 (FG), 43 to 44 (FG), 59 to 60 (FG), 73 to 74 (FG), 81 to 82 (FG), 92 to 93 (FG), 105 to 106 (FG), 117 to 118 (FG), 125 to 126 (FG), 135 to 136 (FG), 148 to 149 (FG), 160 to 161 (FG), 163 to 164 (FG), 174 to 175 (FG), 264 to 265 (FG), 266 to 267 (FG), 282 to 283 (FG), 293 to 294 (FG), 304 to 305 (FG), 309 to 310 (FG), 319 to 320 (FG), 333 to 334 (FG), 352 to 353 (FG), 358 to 359 (FG), 365 to 366 (FG), 377 to 378 (FG), 384 to 385 (FG), 387 to 388 (FG), 400 to 401 (FG), 413 to 414 (FG), 426 to 427 (FG), 428 to 429 (FG), 441 to 442 (FG), 454 to 455 (FG), 467 to 468 (FG), 493 to 494 (FG), 496 to 497 (FG), 516 to 517 (FG), 527 to 528 (FG), 546 to 547 (FG), 553 to 554 (FG), and 565 to 566 (FG). Residues 2-566 (FGGAKPSFGA…GGSLGGGGFG (565 aa)) are 46 X 2 AA repeats of F-G. Disordered stretches follow at residues 698–768 (KSVE…WLHP) and 781–860 (TGMD…AANQ). Polar residues predominate over residues 704-718 (NPSSSIGSAPNTPQS). A compositionally biased stretch (basic and acidic residues) spans 755–768 (ESQDNGRRESWLHP). Polar residues-rich tracts occupy residues 781-794 (TGMDQGSPHNSTLN) and 806-850 (RPSS…SNRS). Residues 886–1028 (RVGYYTIPSL…GSWVFRVKHF (143 aa)) enclose the Peptidase S59 domain. Serine 1029 (nucleophile) is an active-site residue.

This sequence belongs to the nucleoporin GLFG family. As to quaternary structure, part of the nuclear pore complex (NPC). Interacts with Rae1. Nuclear pore complex protein Nup98: Interacts with pzg and Chro. Interacts with MBD-R2; the interaction allows Nup98 recruitment to chromatin. Interacts with Trx. Interacts with Wds. Interacts with Mgtor and Cp190. Upon ecdysone stimulation, interacts with EcR, CTCF, su(Hw) and Trl. Isoform A and isoform C are autoproteolytically cleaved to yield Nup98 and Nup96 or Nup98 only, respectively. As to expression, expressed in brain.

It localises to the chromosome. The protein resides in the nucleus. Its subcellular location is the nucleoplasm. It is found in the nucleus membrane. The protein localises to the nuclear pore complex. Functionally, part of the nuclear pore complex (NPC). Required for MAD import as part of the Nup107-160 complex and required for nuclear export of Moe probably via its association with Rae1. Plays a role in nuclear mRNA export. Promotes cell antiviral response by up-regulating FoxK-dependent antiviral gene transcription. In germline stem cells, involved in their maintenance and division together with the TGF-Beta and EGFR signaling pathways. In larval lymph glands, has a role in the maintenance of hematopoiesis by regulating Pvr expression. In terms of biological role, part of the nuclear pore complex (NPC). In the nucleoplasm, binds to transcriptionally active chromatin with a preference for regulatory regions; co-localizes with RNA polymerase II in a RNA-independent manner and before transition into transcription elongation. Plays a role in the transcriptional memory process by stabilizing enhancer-promoter loops and by mediating anchoring of chromatin to the nuclear pore complex region. During larval development, interacts with trx and MBD-R2 and regulates transcription of developmental genes including ecdysone-responsive genes such as Eip74 and E23. Its function is as follows. Part of the nuclear pore complex (NPC). This is Nuclear pore complex protein Nup98-Nup96 from Drosophila melanogaster (Fruit fly).